The primary structure comprises 70 residues: MAIQSKYTNTQVEALISELLAVLAKHQAPTDLSLMVLGNCVTHLLDKKVPGESRQKVAEQFAKALTQSVK.

It belongs to the UPF0352 family.

The polypeptide is UPF0352 protein Sfri_2492 (Shewanella frigidimarina (strain NCIMB 400)).